The chain runs to 220 residues: Protein-L-isoaspartate O-methyltransferase (220 aa).

Serine 70 is a catalytic residue.

Belongs to the methyltransferase superfamily. L-isoaspartyl/D-aspartyl protein methyltransferase family.

The protein resides in the cytoplasm. It carries out the reaction [protein]-L-isoaspartate + S-adenosyl-L-methionine = [protein]-L-isoaspartate alpha-methyl ester + S-adenosyl-L-homocysteine. Its function is as follows. Catalyzes the methyl esterification of L-isoaspartyl residues in peptides and proteins that result from spontaneous decomposition of normal L-aspartyl and L-asparaginyl residues. It plays a role in the repair and/or degradation of damaged proteins. The protein is Protein-L-isoaspartate O-methyltransferase of Halorhodospira halophila (strain DSM 244 / SL1) (Ectothiorhodospira halophila (strain DSM 244 / SL1)).